The chain runs to 204 residues: Protease (204 aa).

Active-site residues include H53, D70, and C121.

This sequence belongs to the peptidase C5 family. Interacts with protease cofactor pVI-C; this interaction is necessary for protease activation.

The protein resides in the virion. It localises to the host nucleus. It carries out the reaction Cleaves proteins of the adenovirus and its host cell at two consensus sites: -Yaa-Xaa-Gly-Gly-|-Xaa- and -Yaa-Xaa-Gly-Xaa-|-Gly- (in which Yaa is Met, Ile or Leu, and Xaa is any amino acid).. With respect to regulation, requires DNA and protease cofactor for maximal activation. Inside nascent virions, becomes partially activated by binding to the viral DNA, allowing it to cleave the cofactor that binds to the protease and fully activates it. Actin, like the viral protease cofactor, seems to act as a cofactor in the cleavage of cytokeratin 18 and of actin itself. Its function is as follows. Cleaves viral precursor proteins (pTP, pIIIa, pVI, pVII, pVIII, and pX) inside newly assembled particles giving rise to mature virions. Protease complexed to its cofactor slides along the viral DNA to specifically locate and cleave the viral precursors. Mature virions have a weakened organization compared to the unmature virions, thereby facilitating subsequent uncoating. Without maturation, the particle lacks infectivity and is unable to uncoat. Late in adenovirus infection, in the cytoplasm, may participate in the cytoskeleton destruction. Cleaves host cell cytoskeletal keratins K7 and K18. The protein is Protease of Porcine adenovirus A serotype 3 (PAdV-3).